Consider the following 95-residue polypeptide: Small ribosomal subunit protein uS19 (95 aa).

This sequence belongs to the universal ribosomal protein uS19 family.

Functionally, protein S19 forms a complex with S13 that binds strongly to the 16S ribosomal RNA. The chain is Small ribosomal subunit protein uS19 from Roseiflexus castenholzii (strain DSM 13941 / HLO8).